The sequence spans 337 residues: Putative tRNA (cytidine(32)/guanosine(34)-2'-O)-methyltransferase (337 aa).

S-adenosyl-L-methionine contacts are provided by Gly53, Trp55, Asp76, Asp92, and Asp117. Lys157 functions as the Proton acceptor in the catalytic mechanism. 2 stretches are compositionally biased toward basic and acidic residues: residues 304–318 (LKAE…KKTP) and 327–337 (ELEKAAEKFQL). Residues 304–337 (LKAELSRGKDQKKTPAENVPSVEELEKAAEKFQL) form a disordered region.

The protein belongs to the class I-like SAM-binding methyltransferase superfamily. RNA methyltransferase RlmE family. TRM7 subfamily.

It localises to the cytoplasm. The enzyme catalyses cytidine(32)/guanosine(34) in tRNA + 2 S-adenosyl-L-methionine = 2'-O-methylcytidine(32)/2'-O-methylguanosine(34) in tRNA + 2 S-adenosyl-L-homocysteine + 2 H(+). Its function is as follows. Methylates the 2'-O-ribose of nucleotides at positions 32 and 34 of the tRNA anticodon loop of substrate tRNAs. This is Putative tRNA (cytidine(32)/guanosine(34)-2'-O)-methyltransferase from Caenorhabditis elegans.